A 469-amino-acid chain; its full sequence is Protein YfjI (469 aa).

The chain is Protein YfjI (yfjI) from Escherichia coli (strain K12).